A 487-amino-acid polypeptide reads, in one-letter code: Lysophospholipid acyltransferase 5 (487 aa).

N-acetylalanine is present on Ala2. 4 helical membrane-spanning segments follow: residues 44–64, 84–104, 111–131, and 180–200; these read LIFS…YLFY, FNFG…FLIL, VTAV…GYYY, and GVPS…FLVG. Asn225 carries N-linked (GlcNAc...) asparagine glycosylation. 2 helical membrane passes run 236–256 and 285–305; these read LGLV…DDYL and VTCW…FNGF. N-linked (GlcNAc...) asparagine glycosylation is found at Asn308 and Asn331. Catalysis depends on residues Asn338 and His374. 3 helical membrane passes run 364–384, 422–442, and 453–473; these read GLSL…LICF, LVQQ…FCLF, and SIYF…PYIH. The Di-lysine motif signature appears at 484-487; that stretch reads KKRE.

It belongs to the membrane-bound acyltransferase family. Detected ubiquitously, with high expression levels in small intestine, brown adipose tissue, liver, kidney and testis. Expressed in liver and both proximal and distal small intestine (at protein level). Expressed in peritoneal macrophages.

The protein localises to the endoplasmic reticulum membrane. The catalysed reaction is a 1-acyl-sn-glycero-3-phosphocholine + an acyl-CoA = a 1,2-diacyl-sn-glycero-3-phosphocholine + CoA. It carries out the reaction a 1-acyl-sn-glycero-3-phosphoethanolamine + an acyl-CoA = a 1,2-diacyl-sn-glycero-3-phosphoethanolamine + CoA. The enzyme catalyses a 1-acyl-sn-glycero-3-phospho-L-serine + an acyl-CoA = a 1,2-diacyl-sn-glycero-3-phospho-L-serine + CoA. It catalyses the reaction (9Z,12Z)-octadecadienoyl-CoA + a 1-acyl-sn-glycero-3-phosphocholine = 1-acyl-2-(9Z,12Z)-octadecadienoyl-sn-glycero-3-phosphocholine + CoA. The catalysed reaction is (5Z,8Z,11Z,14Z)-eicosatetraenoyl-CoA + a 1-acyl-sn-glycero-3-phosphocholine = 1-acyl-2-(5Z,8Z,11Z,14Z-eicosatetraenoyl)-sn-glycero-3-phosphocholine + CoA. It carries out the reaction dodecanoyl-CoA + 1-hexadecanoyl-sn-glycero-3-phosphocholine = 1-hexadecanoyl-2-dodecanoyl-sn-glycero-3-phosphocholine + CoA. The enzyme catalyses octadecanoyl-CoA + 1-hexadecanoyl-sn-glycero-3-phosphocholine = 1-hexadecanoyl-2-octadecanoyl-sn-glycero-3-phosphocholine + CoA. It catalyses the reaction 1-dodecanoyl-sn-glycero-3-phosphocholine + hexadecanoyl-CoA = 1-dodecanoyl-2-hexadecanoyl-sn-glycero-3-phosphocholine + CoA. The catalysed reaction is 1-tetradecanoyl-sn-glycero-3-phosphocholine + hexadecanoyl-CoA = 1-tetradecanoyl-2-hexadecanoyl-sn-glycero-3-phosphocholine + CoA. It carries out the reaction 1-hexadecanoyl-sn-glycero-3-phosphocholine + hexadecanoyl-CoA = 1,2-dihexadecanoyl-sn-glycero-3-phosphocholine + CoA. The enzyme catalyses 1-octadecanoyl-sn-glycero-3-phosphocholine + hexadecanoyl-CoA = 1-octadecanoyl-2-hexadecanoyl-sn-glycero-3-phosphocholine + CoA. It catalyses the reaction 1-(9Z-octadecenoyl)-sn-glycero-3-phosphocholine + hexadecanoyl-CoA = 1-(9Z-octadecenoyl)-2-hexadecanoyl-sn-glycero-3-phosphocholine + CoA. The catalysed reaction is (9Z)-hexadecenoyl-CoA + 1-hexadecanoyl-sn-glycero-3-phosphocholine = 1-hexadecanoyl-2-(9Z-hexadecenoyl)-sn-glycero-3-phosphocholine + CoA. It carries out the reaction 1-hexadecanoyl-sn-glycero-3-phosphocholine + (9Z)-octadecenoyl-CoA = 1-hexadecanoyl-2-(9Z-octadecenoyl)-sn-glycero-3-phosphocholine + CoA. The enzyme catalyses (9Z,12Z)-octadecadienoyl-CoA + 1-hexadecanoyl-sn-glycero-3-phosphocholine = 1-hexadecanoyl-2-(9Z,12Z-octadecadienoyl)-sn-glycero-3-phosphocholine + CoA. It catalyses the reaction 1-dodecanoyl-sn-glycero-3-phosphocholine + (5Z,8Z,11Z,14Z)-eicosatetraenoyl-CoA = 1-dodecanoyl-2-(5Z,8Z,11Z,14Z)-eicosatetraenoyl-sn-glycero-3-phosphocholine + CoA. The catalysed reaction is (5Z,8Z,11Z,14Z)-eicosatetraenoyl-CoA + 1-hexadecanoyl-sn-glycero-3-phosphocholine = 1-hexadecanoyl-2-(5Z,8Z,11Z,14Z-eicosatetraenoyl)-sn-glycero-3-phosphocholine + CoA. It carries out the reaction 1-octadecanoyl-sn-glycero-3-phosphocholine + (5Z,8Z,11Z,14Z)-eicosatetraenoyl-CoA = 1-octadecanoyl-2-(5Z,8Z,11Z,14Z-eicosatetraenoyl)-sn-glycero-3-phosphocholine + CoA. The enzyme catalyses 1-eicosanoyl-sn-glycero-3-phosphocholine + (5Z,8Z,11Z,14Z)-eicosatetraenoyl-CoA = 1-eicosanoyl-2-(5Z,8Z,11Z,14Z)-eicosatetraenoyl-sn-glycero-3-phosphocholine + CoA. It catalyses the reaction 1-(9Z-octadecenoyl)-sn-glycero-3-phosphocholine + (9Z)-octadecenoyl-CoA = 1,2-di-(9Z-octadecenoyl)-sn-glycero-3-phosphocholine + CoA. The catalysed reaction is 1-(9Z-octadecenoyl)-sn-glycero-3-phosphocholine + (9Z,12Z)-octadecadienoyl-CoA = 1-(9Z)-octadecenoyl-2-(9Z,12Z)-octadecadienoyl-sn-glycero-3-phosphocholine + CoA. It carries out the reaction 1-(9Z-octadecenoyl)-sn-glycero-3-phosphocholine + (5Z,8Z,11Z,14Z)-eicosatetraenoyl-CoA = 1-(9Z)-octadecenoyl-2-(5Z,8Z,11Z,14Z)-icosatetraenoyl-sn-glycero-3-phosphocholine + CoA. The enzyme catalyses a 1-acyl-sn-glycero-3-phosphoethanolamine + (9Z,12Z)-octadecadienoyl-CoA = 1-acyl-2-(9Z,12Z)-octadecadienoyl-sn-glycero-3-phosphoethanolamine + CoA. It catalyses the reaction 1-(9Z-octadecenoyl)-sn-glycero-3-phosphoethanolamine + (9Z,12Z)-octadecadienoyl-CoA = 1-(9Z)-octadecenoyl-2-(9Z,12Z)-octadecadienoyl-sn-glycero-3-phosphoethanolamine + CoA. The catalysed reaction is 1-(10Z-heptadecenoyl)-sn-glycero-3-phosphoethanolamine + (9Z,12Z)-octadecadienoyl-CoA = 1-(10Z-heptadecenoyl)-2-(9Z,12Z-octadecadienoyl)-sn-glycero-3-phosphoethanolamine + CoA. It carries out the reaction a 1-acyl-sn-glycero-3-phosphoethanolamine + (5Z,8Z,11Z,14Z)-eicosatetraenoyl-CoA = 1-acyl-2-(5Z,8Z,11Z,14Z)-eicosatetraenoyl-sn-glycero-3-phosphoethanolamine + CoA. The enzyme catalyses 1-hexadecanoyl-sn-glycero-3-phosphoethanolamine + (5Z,8Z,11Z,14Z)-eicosatetraenoyl-CoA = 1-hexadecanoyl-2-(5Z,8Z,11Z,14Z-eicosatetraenoyl)-sn-glycero-3-phosphoethanolamine + CoA. It catalyses the reaction 1-(9Z-octadecenoyl)-sn-glycero-3-phosphoethanolamine + (5Z,8Z,11Z,14Z)-eicosatetraenoyl-CoA = 1-(9Z)-octadecenoyl-2-(5Z,8Z,11Z,14Z)-eicosatetraenoyl-sn-glycero-3-phosphoethanolamine + CoA. The catalysed reaction is 1-(10Z-heptadecenoyl)-sn-glycero-3-phosphoethanolamine + (5Z,8Z,11Z,14Z)-eicosatetraenoyl-CoA = 1-(10Z-heptadecenoyl)-2-(5Z,8Z,11Z,14Z-eicosatetraenoyl)-sn-glycero-3-phosphoethanolamine + CoA. It carries out the reaction a 1-O-(1Z-alkenyl)-sn-glycero-3-phosphoethanolamine + (5Z,8Z,11Z,14Z)-eicosatetraenoyl-CoA = 1-O-(1Z)-alkenyl-2-(5Z,8Z,11Z,14Z)-eicosatetraenoyl-sn-glycero-3-phosphoethanolamine + CoA. The enzyme catalyses a 1-acyl-sn-glycero-3-phospho-L-serine + (9Z,12Z)-octadecadienoyl-CoA = 1-acyl-2-(9Z,12Z-octadecadienoyl)-sn-glycero-3-phospho-L-serine + CoA. It catalyses the reaction a 1-acyl-sn-glycero-3-phospho-L-serine + (5Z,8Z,11Z,14Z)-eicosatetraenoyl-CoA = 1-acyl-2-(5Z,8Z,11Z,14Z-eicosatetraenoyl)-sn-glycero-3-phospho-L-serine + CoA. The catalysed reaction is 1-hexadecanoyl-sn-glycero-3-phospho-L-serine + (9Z)-octadecenoyl-CoA = 1-hexadecanoyl-2-(9Z-octadecenoyl)-sn-glycero-3-phospho-L-serine + CoA. It carries out the reaction 1-(9Z-octadecenoyl)-sn-glycero-3-phospho-L-serine + (9Z)-octadecenoyl-CoA = 1,2-di-(9Z)-octadecenoyl-sn-glycero-3-phospho-L-serine + CoA. The enzyme catalyses 1-hexadecanoyl-sn-glycero-3-phospho-L-serine + (9Z,12Z)-octadecadienoyl-CoA = 1-hexadecanoyl-2-(9Z,12Z-octadecadienoyl)-sn-glycero-3-phospho-L-serine + CoA. It catalyses the reaction 1-(9Z-octadecenoyl)-sn-glycero-3-phospho-L-serine + (9Z,12Z)-octadecadienoyl-CoA = 1-(9Z-octadecenoyl)-2-(9Z,12Z-octadienoyl)-sn-glycero-3-phospho-L-serine + CoA. The catalysed reaction is 1-hexadecanoyl-sn-glycero-3-phospho-L-serine + (5Z,8Z,11Z,14Z)-eicosatetraenoyl-CoA = 1-hexadecanoyl-2-(5Z,8Z,11Z,14Z-eicosatetraenoyl)-sn-glycero-3-phospho-L-serine + CoA. It carries out the reaction 1-(9Z-octadecenoyl)-sn-glycero-3-phospho-L-serine + (5Z,8Z,11Z,14Z)-eicosatetraenoyl-CoA = 1-(9Z-octadecenoyl)-2-(5Z,8Z,11Z,14Z-eicosatetraenoyl)-sn-glycero-3-phospho-L-serine + CoA. Its pathway is lipid metabolism; phospholipid metabolism. Lysophospholipid O-acyltransferase (LPLAT) that catalyzes the reacylation step of the phospholipid remodeling process also known as the Lands cycle. Catalyzes transfer of the fatty acyl chain from fatty acyl-CoA to 1-acyl lysophospholipid to form various classes of phospholipids. Converts 1-acyl lysophosphatidylcholine (LPC) into phosphatidylcholine (PC) (LPCAT activity), 1-acyl lysophosphatidylserine (LPS) into phosphatidylserine (PS) (LPSAT activity) and 1-acyl lysophosphatidylethanolamine (LPE) into phosphatidylethanolamine (PE) (LPEAT activity). Favors polyunsaturated fatty acyl-CoAs as acyl donors compared to saturated fatty acyl-CoAs. Has higher activity for LPC acyl acceptors compared to LPEs and LPSs. Can also transfer the fatty acyl chain from fatty acyl-CoA to 1-O-alkyl lysophospholipid or 1-O-alkenyl lysophospholipid with lower efficiency. Acts as a major LPC O-acyltransferase in liver and intestine. As a component of the liver X receptor/NR1H3 or NR1H2 signaling pathway, mainly catalyzes the incorporation of arachidonate into PCs of endoplasmic reticulum (ER) membranes, increasing membrane dynamics and enabling triacylglycerols transfer to nascent very low-density lipoprotein (VLDL) particles. Promotes processing of sterol regulatory protein SREBF1 in hepatocytes, likely by facilitating the translocation of SREBF1-SCAP complex from ER to the Golgi apparatus. Participates in mechanisms by which the liver X receptor/NR1H3 or NR1H2 signaling pathway counteracts lipid-induced ER stress response and inflammation. Down-regulates hepatic inflammation by limiting arachidonic acid availability for synthesis of inflammatory eicosanoids, such as prostaglandins. In enterocytes, acts as a component of a gut-brain feedback loop that coordinates dietary lipid absorption and food intake. Regulates the abundance of PCs containing linoleate and arachidonate in enterocyte membranes, enabling passive diffusion of fatty acids and cholesterol across the membrane for efficient chylomicron assembly. In the intestinal crypt, acts as a component of dietary-responsive phospholipid-cholesterol axis, regulating the biosynthesis of cholesterol and its mitogenic effects on intestinal stem cells. This Mus musculus (Mouse) protein is Lysophospholipid acyltransferase 5 (Lpcat3).